The primary structure comprises 232 residues: Ubiquitin-conjugating enzyme E2-24 kDa (232 aa).

Positions 1–37 (MSSTPAAGSAAEVATSSATSNAPSAPSTTASNVSNTS) are enriched in low complexity. Residues 1–87 (MSSTPAAGSA…PRISRALGTS (87 aa)) form a disordered region. A compositionally biased stretch (gly residues) spans 58–67 (GASGSNAGGG). One can recognise a UBC core domain in the interval 86–232 (TSAKRIQKEL…ARLWTKRYAT (147 aa)). C170 functions as the Glycyl thioester intermediate in the catalytic mechanism.

The protein belongs to the ubiquitin-conjugating enzyme family.

The enzyme catalyses S-ubiquitinyl-[E1 ubiquitin-activating enzyme]-L-cysteine + [E2 ubiquitin-conjugating enzyme]-L-cysteine = [E1 ubiquitin-activating enzyme]-L-cysteine + S-ubiquitinyl-[E2 ubiquitin-conjugating enzyme]-L-cysteine.. Its pathway is protein modification; protein ubiquitination. In terms of biological role, catalyzes the covalent attachment of ubiquitin to other proteins. The polypeptide is Ubiquitin-conjugating enzyme E2-24 kDa (Drosophila melanogaster (Fruit fly)).